A 274-amino-acid polypeptide reads, in one-letter code: Penicillin-insensitive murein endopeptidase (274 aa).

An N-terminal signal peptide occupies residues 1-19 (MKKTAIALLAWFVSSASLA). 3 disulfide bridges follow: Cys-44–Cys-265, Cys-187–Cys-235, and Cys-216–Cys-223. Positions 110, 113, 120, 147, 150, and 211 each coordinate Zn(2+). Positions 225–274 (DQPLPPPGDGCGAELQSWFEPPKPGTTKPEKKTPPPLPPSCQALLDEHVL) are disordered.

This sequence belongs to the peptidase M74 family. In terms of assembly, dimer. Requires Zn(2+) as cofactor.

Its subcellular location is the periplasm. Its function is as follows. Murein endopeptidase that cleaves the D-alanyl-meso-2,6-diamino-pimelyl amide bond that connects peptidoglycan strands. Likely plays a role in the removal of murein from the sacculus. This Salmonella agona (strain SL483) protein is Penicillin-insensitive murein endopeptidase.